The following is a 107-amino-acid chain: Small ribosomal subunit protein bS6 (107 aa).

It belongs to the bacterial ribosomal protein bS6 family.

Functionally, binds together with bS18 to 16S ribosomal RNA. In Synechococcus elongatus (strain ATCC 33912 / PCC 7942 / FACHB-805) (Anacystis nidulans R2), this protein is Small ribosomal subunit protein bS6.